The sequence spans 461 residues: Type IV secretion system protein PtlD homolog (461 aa).

An N-terminal signal peptide occupies residues 1 to 24 (MAGLSRILLSCTLACLLAGQAAQA). The next 5 membrane-spanning stretches (helical) occupy residues 118–138 (LQPL…YALL), 232–252 (WLLC…LAAS), 253–273 (LLIV…LFLV), 294–314 (ALVF…VLAG), and 333–353 (MLAA…VPLA). Low complexity predominate over residues 376–411 (AHRQAAARQYAPRPAAAAAAAGPHQAGTYAASATPA). The segment at 376 to 461 (AHRQAAARQY…RVLPRKPNLP (86 aa)) is disordered. Residues 439–453 (VRRDDRPAPAPDRRV) are compositionally biased toward basic and acidic residues.

The protein resides in the cell membrane. This Bordetella bronchiseptica (strain ATCC BAA-588 / NCTC 13252 / RB50) (Alcaligenes bronchisepticus) protein is Type IV secretion system protein PtlD homolog (ptlD).